The chain runs to 289 residues: G1/S-specific cyclin-D2 (289 aa).

Positions 26–151 (LQNLLTIEER…VLGKLKWNLA (126 aa)) constitute a Cyclin N-terminal domain. The segment at 264–289 (QHNAGSKSVEDPDQATTPTDVRDVDL) is disordered. A Phosphoserine modification is found at serine 271. Threonine 280 is modified (phosphothreonine).

It belongs to the cyclin family. Cyclin D subfamily. In terms of assembly, interacts with either CDK4 or CDK6 protein kinase to form a serine/threonine kinase holoenzyme complex. The cyclin subunit imparts substrate specificity to the complex. Phosphorylation at Thr-280 by MAP kinases is required for ubiquitination and degradation by the DCX(AMBRA1) complex. Post-translationally, ubiquitinated by the DCX(AMBRA1) complex during the transition from G1 to S cell phase, leading to its degradation: ubiquitination is dependent on Thr-280 phosphorylation. The DCX(AMBRA1) complex represents the major regulator of CCND2 stability during the G1/S transition. Polyubiquitinated by the SCF(FBXL2) complex, leading to proteasomal degradation.

It localises to the nucleus. Its subcellular location is the cytoplasm. It is found in the nucleus membrane. Functionally, regulatory component of the cyclin D2-CDK4 (DC) complex that phosphorylates and inhibits members of the retinoblastoma (RB) protein family including RB1 and regulates the cell-cycle during G(1)/S transition. Phosphorylation of RB1 allows dissociation of the transcription factor E2F from the RB/E2F complex and the subsequent transcription of E2F target genes which are responsible for the progression through the G(1) phase. Hypophosphorylates RB1 in early G(1) phase. Cyclin D-CDK4 complexes are major integrators of various mitogenenic and antimitogenic signals. This is G1/S-specific cyclin-D2 from Mus musculus (Mouse).